The sequence spans 755 residues: Subtilisin-like protease 4 (755 aa).

The N-terminal stretch at 1-20 is a signal peptide; sequence MDYFLFIALTFLLTFHVHNA. The 79-residue stretch at 41 to 119 folds into the Inhibitor I9 domain; it reads YIIHVTGPEG…ISAHPQRVLH (79 aa). The Peptidase S8 domain occupies 128-611; sequence FLGLQQDTGV…SGHVNPSRAN (484 aa). The Charge relay system role is filled by aspartate 153. Asparagine 182 carries an N-linked (GlcNAc...) asparagine glycan. The Charge relay system role is filled by histidine 217. N-linked (GlcNAc...) asparagine glycans are attached at residues asparagine 297, asparagine 325, asparagine 393, asparagine 468, and asparagine 529. In terms of domain architecture, PA spans 376–461; it reads PLAYAGKNGK…ATHVSYAAGI (86 aa). Serine 544 (charge relay system) is an active-site residue. N-linked (GlcNAc...) asparagine glycosylation is found at asparagine 706 and asparagine 727.

The protein belongs to the peptidase S8 family.

It is found in the secreted. The protein resides in the extracellular space. The protein localises to the apoplast. Its function is as follows. Required for arbuscular mycorrhiza (AM) development during AM symbiosis with AM fungi (e.g. Glomeromycota intraradices). The polypeptide is Subtilisin-like protease 4 (Lotus japonicus (Lotus corniculatus var. japonicus)).